Here is a 154-residue protein sequence, read N- to C-terminus: Fucose mutarotase (154 aa).

The active-site Proton donor is His-24. Asp-32 serves as a coordination point for substrate. Asp-69 is a catalytic residue. Substrate-binding residues include Met-79, Tyr-120, Tyr-138, and Asn-140. Tyr-120 is an active-site residue.

This sequence belongs to the RbsD / FucU family. In terms of assembly, mainly homodimer, but also exists as homotetramer, homooctamer, and homodecamer. The homodimeric form seems catalytically inactive.

It carries out the reaction alpha-L-fucose = beta-L-fucose. It functions in the pathway carbohydrate metabolism; L-fucose metabolism. Functionally, involved in the interconversion between alpha- and beta-L-fucoses. L-Fucose (6-deoxy-L-galactose) exists as alpha-L-fucose (29.5%) and beta-L-fucose (70.5%), the beta-form is metabolized through the salvage pathway. GDP-L-fucose formed either by the de novo or salvage pathways is transported into the endoplasmic reticulum, where it serves as a substrate for N- and O-glycosylations by fucosyltransferases. Fucosylated structures expressed on cell surfaces or secreted in biological fluids are believed to play a critical role in cell-cell adhesion and recognition processes. In Homo sapiens (Human), this protein is Fucose mutarotase (FUOM).